Here is a 440-residue protein sequence, read N- to C-terminus: Protein CANDIDATE G-PROTEIN COUPLED RECEPTOR 7 (440 aa).

The signal sequence occupies residues 1–24 (MAKMPLSVVVFLLFSAAFLAVSMA). N-linked (GlcNAc...) asparagine glycosylation is found at asparagine 124 and asparagine 162. Helical transmembrane passes span 175–195 (LPTL…FWSY), 207–227 (IHLL…CAAE), 243–263 (ILFY…IILI), 281–301 (VLII…VIGE), and 315–335 (VFLL…VWSI). A glycan (N-linked (GlcNAc...) asparagine) is linked at asparagine 351. A run of 2 helical transmembrane segments spans residues 363–383 (IVVI…KTIA) and 390–410 (VSFA…FHMF).

Belongs to the LU7TM family.

The protein resides in the membrane. Its function is as follows. Plays a role in plants and microbes interactions. G-protein coupled receptor involved in root growth mediated by the bacterial quorum-sensing signals N-acyl-homoserine lactones (AHLs). This Arabidopsis thaliana (Mouse-ear cress) protein is Protein CANDIDATE G-PROTEIN COUPLED RECEPTOR 7.